Here is a 362-residue protein sequence, read N- to C-terminus: Alpha-tubulin N-acetyltransferase (362 aa).

An N-acetyltransferase domain is found at 1–177 (MQFGCNVAEA…NNFLMLDASI (177 aa)). Residues 111 to 124 (FYTH…GIGT) and 147 to 156 (SPKLLAFLSK) contribute to the acetyl-CoA site.

The protein belongs to the acetyltransferase ATAT1 family.

It catalyses the reaction L-lysyl-[alpha-tubulin] + acetyl-CoA = N(6)-acetyl-L-lysyl-[alpha-tubulin] + CoA + H(+). Its function is as follows. Specifically acetylates 'Lys-40' in alpha-tubulin on the lumenal side of microtubules. Promotes microtubule destabilization and accelerates microtubule dynamics; this activity may be independent of acetylation activity. Acetylates alpha-tubulin with a slow enzymatic rate, due to a catalytic site that is not optimized for acetyl transfer. Enters the microtubule through each end and diffuses quickly throughout the lumen of microtubules. Acetylates only long/old microtubules because of its slow acetylation rate since it does not have time to act on dynamically unstable microtubules before the enzyme is released. This Giardia intestinalis (strain ATCC 50803 / WB clone C6) (Giardia lamblia) protein is Alpha-tubulin N-acetyltransferase.